The following is a 444-amino-acid chain: Multidrug resistance protein MdtA (444 aa).

Residues Met1–Ala20 form the signal peptide. Residues Asn37–Ser52 are compositionally biased toward polar residues. 2 disordered regions span residues Asn37–Pro60 and Thr398–Ser444. Over residues Ala409–Glu419 the composition is skewed to low complexity. The segment covering Ala435 to Ser444 has biased composition (polar residues).

This sequence belongs to the membrane fusion protein (MFP) (TC 8.A.1) family. Part of a tripartite efflux system composed of MdtA, MdtB and MdtC.

It is found in the cell inner membrane. The polypeptide is Multidrug resistance protein MdtA (Yersinia pseudotuberculosis serotype O:3 (strain YPIII)).